The sequence spans 446 residues: MAPRSRRRKHKKPPPVIPMIEIPPTEVSPVSPALSKPGPSIDALGFISLDNNVPGLSQLILQKLNMKNYEEYKLVINGGTPVSSFGFRCQQEMFQKMEDTFRFCAYCKVLPHGLSNCKVLRHCKRCRNVYYCDTECQRSDWPAHRKVCRELRLVAVDRVMEWLLVTGDFVLPSGPWPWLPEDIQNWDTWFSMRGLQLESTLNALLGSHSMTMLWASLGRPRPDPDVLHGSLKRLMTDVLSRPLTLGLGLRTVAIDVGKTGGSTLHVVGASHVETFLIRSGDYDELGYMFPEHLGFHVIMVGVDVATDLLQSSSSLSLEPGTIQLSGHRALYHDFWEEQIETGILAHPDLVAAFHPGFHASPGLMEAWLPTLLLLRDYEIPTLITVYSQQELEASLQILVNLDTHIIACGANPFASLKPEQVYSNPNKQPVYSSAYYIMFLGSSPAN.

Zn(2+)-binding residues include Cys104, Cys107, Cys123, Cys126, Cys132, Cys136, His144, and Cys148. An MYND-type zinc finger spans residues Cys104–Cys148.

In Mus musculus (Mouse), this protein is Putative protein MSS51 homolog, mitochondrial (Mss51).